Consider the following 350-residue polypeptide: C5a anaphylatoxin chemotactic receptor 1 (350 aa).

The Extracellular portion of the chain corresponds to M1 to D37. N-linked (GlcNAc...) asparagine glycosylation occurs at N5. Residues D10–D18 are required for CHIPS binding. Residues Y11 and Y14 each carry the sulfotyrosine modification. Positions D21–S30 are involved in C5a binding. A helical membrane pass occupies residues I38–F64. Over E65–T69 the chain is Cytoplasmic. The helical transmembrane segment at I70–F93 threads the bilayer. The Extracellular segment spans residues T94–S110. C109 and C188 are oxidised to a cystine. Residues I111–A132 traverse the membrane as a helical segment. Topologically, residues D133 to A153 are cytoplasmic. Residues W154–Y174 form a helical membrane-spanning segment. The Extracellular segment spans residues R175–R200. A helical membrane pass occupies residues A201–L226. Over L227 to K242 the chain is Cytoplasmic. A helical membrane pass occupies residues V243–M265. Over S266–D282 the chain is Extracellular. The chain crosses the membrane as a helical span at residues S283 to A303. Residues G304–V350 are Cytoplasmic-facing. Phosphoserine is present on residues S314, S317, S327, S332, S334, and S338.

The protein belongs to the G-protein coupled receptor 1 family. As to quaternary structure, homodimer. May also form higher-order oligomers. Interacts (when phosphorylated) with ARRB1 and ARRB2; the interaction is associated with internalization of C5aR. Interacts (via N-terminal domain) with S.aureus chemotaxis inhibitory protein (CHIPS); the interaction blocks the receptor and may thus inhibit the immune response. Sulfation plays a critical role in the association of C5aR with C5a, but no significant role in the ability of the receptor to transduce a signal and mobilize calcium in response to a small a small peptide agonist. Sulfation at Tyr-14 is important for CHIPS binding. Post-translationally, phosphorylated on serine residues in response to C5a binding, resulting in internalization of the receptor and short-term desensitization to the ligand. The key residues involved in this process are Ser-334 and Ser-338.

It localises to the cell membrane. Its subcellular location is the cytoplasmic vesicle. Receptor for the chemotactic and inflammatory peptide anaphylatoxin C5a. The ligand interacts with at least two sites on the receptor: a high-affinity site on the extracellular N-terminus, and a second site in the transmembrane region which activates downstream signaling events. Receptor activation stimulates chemotaxis, granule enzyme release, intracellular calcium release and superoxide anion production. This chain is C5a anaphylatoxin chemotactic receptor 1 (C5AR1), found in Homo sapiens (Human).